A 400-amino-acid chain; its full sequence is Enoyl-[acyl-carrier-protein] reductase [NADH] 1 (400 aa).

NAD(+) is bound by residues 48 to 53 (GASSGY), 74 to 75 (FE), 111 to 112 (DA), and 139 to 140 (LA). Tyrosine 225 provides a ligand contact to substrate. The active-site Proton donor is the tyrosine 235. NAD(+) is bound by residues lysine 244 and 273 to 275 (VVT).

It belongs to the TER reductase family. As to quaternary structure, monomer.

The catalysed reaction is a 2,3-saturated acyl-[ACP] + NAD(+) = a (2E)-enoyl-[ACP] + NADH + H(+). It participates in lipid metabolism; fatty acid biosynthesis. Involved in the final reduction of the elongation cycle of fatty acid synthesis (FAS II). Catalyzes the reduction of a carbon-carbon double bond in an enoyl moiety that is covalently linked to an acyl carrier protein (ACP). The polypeptide is Enoyl-[acyl-carrier-protein] reductase [NADH] 1 (Vibrio vulnificus (strain YJ016)).